The sequence spans 268 residues: 4-hydroxy-tetrahydrodipicolinate reductase (268 aa).

NAD(+)-binding positions include 9 to 14 (GAAGRM), 99 to 101 (GTT), and 123 to 126 (ASNF). Catalysis depends on His156, which acts as the Proton donor/acceptor. (S)-2,3,4,5-tetrahydrodipicolinate is bound at residue His157. Lys160 (proton donor) is an active-site residue. 166–167 (GT) is a binding site for (S)-2,3,4,5-tetrahydrodipicolinate.

This sequence belongs to the DapB family.

It localises to the cytoplasm. The catalysed reaction is (S)-2,3,4,5-tetrahydrodipicolinate + NAD(+) + H2O = (2S,4S)-4-hydroxy-2,3,4,5-tetrahydrodipicolinate + NADH + H(+). It carries out the reaction (S)-2,3,4,5-tetrahydrodipicolinate + NADP(+) + H2O = (2S,4S)-4-hydroxy-2,3,4,5-tetrahydrodipicolinate + NADPH + H(+). The protein operates within amino-acid biosynthesis; L-lysine biosynthesis via DAP pathway; (S)-tetrahydrodipicolinate from L-aspartate: step 4/4. In terms of biological role, catalyzes the conversion of 4-hydroxy-tetrahydrodipicolinate (HTPA) to tetrahydrodipicolinate. The sequence is that of 4-hydroxy-tetrahydrodipicolinate reductase from Saccharophagus degradans (strain 2-40 / ATCC 43961 / DSM 17024).